A 339-amino-acid chain; its full sequence is tRNA N6-adenosine threonylcarbamoyltransferase (339 aa).

The Fe cation site is built by H115 and H119. Residues 136 to 140 (LISGG), D168, E185, and S265 each bind substrate. D293 is a Fe cation binding site.

The protein belongs to the KAE1 / TsaD family. The cofactor is Fe(2+).

The protein localises to the cytoplasm. The catalysed reaction is L-threonylcarbamoyladenylate + adenosine(37) in tRNA = N(6)-L-threonylcarbamoyladenosine(37) in tRNA + AMP + H(+). Functionally, required for the formation of a threonylcarbamoyl group on adenosine at position 37 (t(6)A37) in tRNAs that read codons beginning with adenine. Is probably involved in the transfer of the threonylcarbamoyl moiety of threonylcarbamoyl-AMP (TC-AMP) to the N6 group of A37. The chain is tRNA N6-adenosine threonylcarbamoyltransferase from Pyrobaculum calidifontis (strain DSM 21063 / JCM 11548 / VA1).